The primary structure comprises 577 residues: Adenine deaminase (577 aa).

This sequence belongs to the metallo-dependent hydrolases superfamily. Adenine deaminase family. Mn(2+) serves as cofactor.

The enzyme catalyses adenine + H2O + H(+) = hypoxanthine + NH4(+). This chain is Adenine deaminase (adeC), found in Bacillus subtilis (strain 168).